The following is a 54-amino-acid chain: Soricidin (54 aa).

3 cysteine pairs are disulfide-bonded: Cys-2/Cys-23, Cys-6/Cys-27, and Cys-9/Cys-41.

It belongs to the opioid neuropeptide precursor family. As to quaternary structure, member of a multiprotein complex. In terms of tissue distribution, salivary gland.

The protein localises to the secreted. Its function is as follows. Paralytic toxin that immobilizes a mealworm for 7 days. Inhibits the transient receptor potential cation channel subfamily V member 6 (TRPV6). This Blarina brevicauda (Northern short-tailed shrew) protein is Soricidin.